The chain runs to 934 residues: Isoleucine--tRNA ligase (934 aa).

The 'HIGH' region motif lies at 58-68 (PYANGEIHIGH). Glu-559 contributes to the L-isoleucyl-5'-AMP binding site. The 'KMSKS' region motif lies at 600 to 604 (KMSKS). ATP is bound at residue Lys-603. Residues Cys-897, Cys-900, Cys-917, and Cys-920 each contribute to the Zn(2+) site.

Belongs to the class-I aminoacyl-tRNA synthetase family. IleS type 1 subfamily. In terms of assembly, monomer. It depends on Zn(2+) as a cofactor.

The protein localises to the cytoplasm. It carries out the reaction tRNA(Ile) + L-isoleucine + ATP = L-isoleucyl-tRNA(Ile) + AMP + diphosphate. In terms of biological role, catalyzes the attachment of isoleucine to tRNA(Ile). As IleRS can inadvertently accommodate and process structurally similar amino acids such as valine, to avoid such errors it has two additional distinct tRNA(Ile)-dependent editing activities. One activity is designated as 'pretransfer' editing and involves the hydrolysis of activated Val-AMP. The other activity is designated 'posttransfer' editing and involves deacylation of mischarged Val-tRNA(Ile). In Teredinibacter turnerae (strain ATCC 39867 / T7901), this protein is Isoleucine--tRNA ligase.